Consider the following 448-residue polypeptide: Probable glycine dehydrogenase (decarboxylating) subunit 1 (448 aa).

The protein belongs to the GcvP family. N-terminal subunit subfamily. The glycine cleavage system is composed of four proteins: P, T, L and H. In this organism, the P 'protein' is a heterodimer of two subunits.

It catalyses the reaction N(6)-[(R)-lipoyl]-L-lysyl-[glycine-cleavage complex H protein] + glycine + H(+) = N(6)-[(R)-S(8)-aminomethyldihydrolipoyl]-L-lysyl-[glycine-cleavage complex H protein] + CO2. In terms of biological role, the glycine cleavage system catalyzes the degradation of glycine. The P protein binds the alpha-amino group of glycine through its pyridoxal phosphate cofactor; CO(2) is released and the remaining methylamine moiety is then transferred to the lipoamide cofactor of the H protein. In Bacillus licheniformis (strain ATCC 14580 / DSM 13 / JCM 2505 / CCUG 7422 / NBRC 12200 / NCIMB 9375 / NCTC 10341 / NRRL NRS-1264 / Gibson 46), this protein is Probable glycine dehydrogenase (decarboxylating) subunit 1.